We begin with the raw amino-acid sequence, 275 residues long: Rhamnulose-1-phosphate aldolase (275 aa).

Glutamate 117 is an active-site residue. Residues histidine 141, histidine 143, and histidine 212 each coordinate Zn(2+).

The protein belongs to the aldolase class II family. RhaD subfamily. Homotetramer. Zn(2+) serves as cofactor.

Its subcellular location is the cytoplasm. It catalyses the reaction L-rhamnulose 1-phosphate = (S)-lactaldehyde + dihydroxyacetone phosphate. The protein operates within carbohydrate degradation; L-rhamnose degradation; glycerone phosphate from L-rhamnose: step 3/3. Its function is as follows. Catalyzes the reversible cleavage of L-rhamnulose-1-phosphate to dihydroxyacetone phosphate (DHAP) and L-lactaldehyde. The protein is Rhamnulose-1-phosphate aldolase of Salmonella choleraesuis (strain SC-B67).